Consider the following 98-residue polypeptide: MIVTLLNALSAMAAFTAAGLWWRSTVIAVPFDHEIPEDGWRPAAILASGPKGDIDVFKTQNAANALNNRAAKAAALAAACQGTAIALPILQDMFHALV.

A run of 2 helical transmembrane segments spans residues 2–22 (IVTL…GLWW) and 70–90 (AAKA…LPIL).

It is found in the cell membrane. This is an uncharacterized protein from Sinorhizobium fredii (strain NBRC 101917 / NGR234).